Reading from the N-terminus, the 296-residue chain is Formamidopyrimidine-DNA glycosylase (296 aa).

The active-site Schiff-base intermediate with DNA is the proline 2. Glutamate 3 acts as the Proton donor in catalysis. Lysine 58 (proton donor; for beta-elimination activity) is an active-site residue. Histidine 104, arginine 126, and lysine 169 together coordinate DNA. Residues 260–296 form an FPG-type zinc finger; that stretch reads SVYDREGQACGTPGCGGTVARIVQAGRSTFYCAACQK. Arginine 286 serves as the catalytic Proton donor; for delta-elimination activity.

The protein belongs to the FPG family. Monomer. Zn(2+) is required as a cofactor.

The enzyme catalyses Hydrolysis of DNA containing ring-opened 7-methylguanine residues, releasing 2,6-diamino-4-hydroxy-5-(N-methyl)formamidopyrimidine.. The catalysed reaction is 2'-deoxyribonucleotide-(2'-deoxyribose 5'-phosphate)-2'-deoxyribonucleotide-DNA = a 3'-end 2'-deoxyribonucleotide-(2,3-dehydro-2,3-deoxyribose 5'-phosphate)-DNA + a 5'-end 5'-phospho-2'-deoxyribonucleoside-DNA + H(+). In terms of biological role, involved in base excision repair of DNA damaged by oxidation or by mutagenic agents. Acts as a DNA glycosylase that recognizes and removes damaged bases. Has a preference for oxidized purines, such as 7,8-dihydro-8-oxoguanine (8-oxoG). Has AP (apurinic/apyrimidinic) lyase activity and introduces nicks in the DNA strand. Cleaves the DNA backbone by beta-delta elimination to generate a single-strand break at the site of the removed base with both 3'- and 5'-phosphates. The chain is Formamidopyrimidine-DNA glycosylase from Rhizobium etli (strain CIAT 652).